Consider the following 211-residue polypeptide: MRASRKGDALAQLLYNEGIRSQAVLNAIAGTPRESFLPDALKHKAYQNTALPIGQGQTISQPYIVAKMTELLLDSPNKPEKVLEIGTGSGYQTAILAQLFAKVFSVERIKTLQFQAKRRMNQLDLHNIAMKHGDGWKGWASKGPYDAIIVTAAAASLPQDLCDQLKEGGRLIIPVGNEQQSLLCIDRIEGELKTSTIESVRFVPLVAGELM.

S60 is an active-site residue.

The protein belongs to the methyltransferase superfamily. L-isoaspartyl/D-aspartyl protein methyltransferase family.

It localises to the cytoplasm. It catalyses the reaction [protein]-L-isoaspartate + S-adenosyl-L-methionine = [protein]-L-isoaspartate alpha-methyl ester + S-adenosyl-L-homocysteine. Functionally, catalyzes the methyl esterification of L-isoaspartyl residues in peptides and proteins that result from spontaneous decomposition of normal L-aspartyl and L-asparaginyl residues. It plays a role in the repair and/or degradation of damaged proteins. The sequence is that of Protein-L-isoaspartate O-methyltransferase from Alteromonas mediterranea (strain DSM 17117 / CIP 110805 / LMG 28347 / Deep ecotype).